The primary structure comprises 112 residues: Nitrogen regulatory protein P-II (112 aa).

Tyr-51 is subject to O-UMP-tyrosine.

Belongs to the P(II) protein family. In terms of assembly, homotrimer. In terms of processing, uridylylated/deuridylylated by GlnD.

P-II indirectly controls the transcription of the glutamine synthetase gene (GlnA). P-II prevents NR-II-catalyzed conversion of NR-I to NR-I-phosphate, the transcriptional activator of GlnA. When P-II is uridylylated to P-II-UMP, these events are reversed. When the ratio of Gln to 2-ketoglutarate decreases, P-II is uridylylated to P-II-UMP, which causes the deadenylation of glutamine synthetase by GlnE, so activating the enzyme. The sequence is that of Nitrogen regulatory protein P-II (glnB) from Haemophilus influenzae (strain ATCC 51907 / DSM 11121 / KW20 / Rd).